The primary structure comprises 136 residues: Nucleoside diphosphate kinase (136 aa).

Residues Lys10, Phe58, Arg86, Thr92, Arg104, and Asn114 each coordinate ATP. Catalysis depends on His117, which acts as the Pros-phosphohistidine intermediate.

This sequence belongs to the NDK family. As to quaternary structure, homotetramer. Requires Mg(2+) as cofactor.

It is found in the cytoplasm. The enzyme catalyses a 2'-deoxyribonucleoside 5'-diphosphate + ATP = a 2'-deoxyribonucleoside 5'-triphosphate + ADP. It catalyses the reaction a ribonucleoside 5'-diphosphate + ATP = a ribonucleoside 5'-triphosphate + ADP. Its function is as follows. Major role in the synthesis of nucleoside triphosphates other than ATP. The ATP gamma phosphate is transferred to the NDP beta phosphate via a ping-pong mechanism, using a phosphorylated active-site intermediate. This is Nucleoside diphosphate kinase from Corynebacterium glutamicum (strain R).